We begin with the raw amino-acid sequence, 392 residues long: Sugar efflux transporter A (392 aa).

Over 1-10 the chain is Cytoplasmic; that stretch reads MIWIMTMARR. Residues 11–31 form a helical membrane-spanning segment; it reads MNGVYAAFMLVAFMMGVAGAL. The Periplasmic portion of the chain corresponds to 32 to 48; that stretch reads QAPTLSLFLSREVGAQP. A helical transmembrane segment spans residues 49-69; it reads FWIGLFYTVNAIAGIGVSLWL. Residues 70–81 lie on the Cytoplasmic side of the membrane; sequence AKRSDSQGDRRK. Residues 82-102 form a helical membrane-spanning segment; sequence LIIFCCLMAIGNALLFAFNRH. At 103 to 106 the chain is on the periplasmic side; that stretch reads YLTL. Residues 107–127 traverse the membrane as a helical segment; the sequence is ITCGVLLASLANTAMPQLFAL. Over 128 to 149 the chain is Cytoplasmic; the sequence is AREYADNSAREVVMFSSVMRAQ. Residues 150–170 form a helical membrane-spanning segment; sequence LSLAWVIGPPLAFMLALNYGF. Thr171 is a topological domain (periplasmic). The chain crosses the membrane as a helical span at residues 172–192; the sequence is VMFSIAAGIFTLSLVLIAFML. Topologically, residues 193 to 219 are cytoplasmic; that stretch reads PSVARVELPSENALSMQGGWQDSNVRM. The chain crosses the membrane as a helical span at residues 220–240; that stretch reads LFVASTLMWTCNTMYIIDMPL. The Periplasmic segment spans residues 241-251; the sequence is WISSELGLPDK. The chain crosses the membrane as a helical span at residues 252-272; the sequence is LAGFLMGTAAGLEIPAMILAG. Topologically, residues 273–282 are cytoplasmic; the sequence is YYVKRYGKRR. A helical membrane pass occupies residues 283–303; the sequence is MMVIAVAAGVLFYTGLIFFNS. Over 304-308 the chain is Periplasmic; sequence RMALM. The chain crosses the membrane as a helical span at residues 309–329; it reads TLQLFNAVFIGIVAGIGMLWF. Topologically, residues 330 to 342 are cytoplasmic; sequence QDLMPGRAGAATT. The helical transmembrane segment at 343–363 threads the bilayer; it reads LFTNSISTGVILAGVIQGAIA. The Periplasmic segment spans residues 364 to 365; it reads QS. The helical transmembrane segment at 366-386 threads the bilayer; that stretch reads WGHFAVYWVIAVISVVALFLT. The Cytoplasmic portion of the chain corresponds to 387 to 392; sequence AKVKDV.

This sequence belongs to the major facilitator superfamily. Set transporter family.

The protein resides in the cell inner membrane. Its function is as follows. Involved in the efflux of sugars. The physiological role may be the detoxification of non-metabolizable sugar analogs. Can transport IPTG, lactose and glucose. Has broad substrate specificity, with preferences for glucosides or galactosides with alkyl or aryl substituents. The polypeptide is Sugar efflux transporter A (setA) (Escherichia coli (strain K12)).